A 527-amino-acid chain; its full sequence is Amine oxidase [flavin-containing] A (527 aa).

Methionine 1 carries the N-acetylmethionine modification. Topologically, residues 1 to 497 (MASREKTSIE…HTFWERNLPS (497 aa)) are cytoplasmic. Serine 383 carries the post-translational modification Phosphoserine. Cysteine 406 carries the S-8alpha-FAD cysteine modification. Residues 498–518 (VTGLLKLIGFTTSVTALWIVA) traverse the membrane as a helical; Anchor for type IV membrane protein segment. The Mitochondrial intermembrane segment spans residues 519–527 (YKFRLLRRS). The interval 520–522 (KFR) is interaction with membrane phospholipid headgroups.

This sequence belongs to the flavin monoamine oxidase family. In terms of assembly, monomer, homo- or heterodimer (containing two subunits of similar size). Each subunit contains a covalently bound flavin. Enzymatically active as monomer. The cofactor is FAD.

Its subcellular location is the mitochondrion outer membrane. It carries out the reaction a secondary aliphatic amine + O2 + H2O = a primary amine + an aldehyde + H2O2. The catalysed reaction is a primary methyl amine + O2 + H2O = an aldehyde + H2O2 + NH4(+). It catalyses the reaction (R)-adrenaline + O2 + H2O = (R)-3,4-dihydroxymandelaldehyde + methylamine + H2O2. The enzyme catalyses dopamine + O2 + H2O = 3,4-dihydroxyphenylacetaldehyde + H2O2 + NH4(+). It carries out the reaction tyramine + O2 + H2O = (4-hydroxyphenyl)acetaldehyde + H2O2 + NH4(+). The catalysed reaction is (R)-noradrenaline + O2 + H2O = (R)-3,4-dihydroxymandelaldehyde + H2O2 + NH4(+). It catalyses the reaction serotonin + O2 + H2O = (5-hydroxyindol-3-yl)acetaldehyde + H2O2 + NH4(+). The enzyme catalyses kynuramine + O2 + H2O = 3-(2-aminophenyl)-3-oxopropanal + H2O2 + NH4(+). It carries out the reaction tryptamine + O2 + H2O = indole-3-acetaldehyde + H2O2 + NH4(+). The catalysed reaction is 2-phenylethylamine + O2 + H2O = 2-phenylacetaldehyde + H2O2 + NH4(+). In terms of biological role, catalyzes the oxidative deamination of primary and some secondary amine such as neurotransmitters, with concomitant reduction of oxygen to hydrogen peroxide and has important functions in the metabolism of neuroactive and vasoactive amines in the central nervous system and peripheral tissues. Preferentially oxidizes serotonin. Also catalyzes the oxidative deamination of kynuramine to 3-(2-aminophenyl)-3-oxopropanal that can spontaneously condense to 4-hydroxyquinoline. The polypeptide is Amine oxidase [flavin-containing] A (Canis lupus familiaris (Dog)).